A 78-amino-acid chain; its full sequence is DNA-directed RNA polymerase subunit Rpo5 (78 aa).

Belongs to the archaeal Rpo5/eukaryotic RPB5 RNA polymerase subunit family. Part of the RNA polymerase complex.

The protein resides in the cytoplasm. The catalysed reaction is RNA(n) + a ribonucleoside 5'-triphosphate = RNA(n+1) + diphosphate. In terms of biological role, DNA-dependent RNA polymerase (RNAP) catalyzes the transcription of DNA into RNA using the four ribonucleoside triphosphates as substrates. This is DNA-directed RNA polymerase subunit Rpo5 from Methanosarcina barkeri (strain Fusaro / DSM 804).